Reading from the N-terminus, the 83-residue chain is uncharacterized protein (83 aa).

Positions 15 to 36 (RLKNGRGNKTMSESDYNTSDSG) are disordered. Over residues 21-35 (GNKTMSESDYNTSDS) the composition is skewed to polar residues.

This is an uncharacterized protein from Aedes vexans (Inland floodwater mosquito).